The following is a 388-amino-acid chain: Gastricsin (388 aa).

The N-terminal stretch at 1–16 is a signal peptide; the sequence is MKWLLVALVCLHLLEA. Positions 17–59 are cleaved as a propeptide — activation peptide; the sequence is AVIKVPLRKFKSIRETLKEKGLLKEFLNTHKYDPALKYRFGDF. The region spanning 73–385 is the Peptidase A1 domain; it reads YFGEISIGTP…DMANNRVGFA (313 aa). The active site involves Asp-91. Cystine bridges form between Cys-104–Cys-109 and Cys-267–Cys-271. Residue Asp-276 is part of the active site. Cys-310 and Cys-343 are disulfide-bonded.

This sequence belongs to the peptidase A1 family.

The protein resides in the secreted. The catalysed reaction is More restricted specificity than pepsin A, but shows preferential cleavage at Tyr-|-Xaa bonds. High activity on hemoglobin.. Its function is as follows. Hydrolyzes a variety of proteins. In Oryctolagus cuniculus (Rabbit), this protein is Gastricsin (PGC).